We begin with the raw amino-acid sequence, 403 residues long: Lipase lipl-5 (403 aa).

An N-terminal signal peptide occupies residues 1 to 18 (MWRFAVFLAAFFVQDVVG). Asparagine 64 is a glycosylation site (N-linked (GlcNAc...) asparagine). Catalysis depends on serine 167, which acts as the Nucleophile. An N-linked (GlcNAc...) asparagine glycan is attached at asparagine 271. Active-site charge relay system residues include aspartate 343 and histidine 375.

This sequence belongs to the AB hydrolase superfamily. Lipase family.

It localises to the lysosome lumen. It is found in the secreted. In terms of biological role, lipase involved in lipid homeostasis. Regulates mitochondrial lipid composition, in particular cardiolipins and coenzyme Q-9 levels, in response to nutrient availability. Does not affect global triglyceride levels in response to nutrient availability. However, in coelomocytes, specifically promotes triglyceride catabolism and lifespan extension in response to nutrient deprivation. This is Lipase lipl-5 from Caenorhabditis elegans.